The chain runs to 124 residues: Hemoglobin subunit alpha (124 aa).

A Globin domain is found at 1 to 124 (PLSAADKTII…VAKALSSHYR (124 aa)). H57 is a binding site for O2. Heme b is bound at residue H79.

The protein belongs to the globin family. In terms of assembly, hb 1 is a heterotetramer of two alpha and two beta-1 chains. Hb 2 is a heterotetramer of two alpha and two beta-2 chains. Hb 3 is a heterotetramer of two alpha and two beta-3 chains. As to expression, red blood cells (at protein level).

Functionally, involved in oxygen transport from gills to the various peripheral tissues. The sequence is that of Hemoglobin subunit alpha from Somniosus microcephalus (Greenland sleeper shark).